We begin with the raw amino-acid sequence, 322 residues long: NADH-quinone oxidoreductase subunit H (322 aa).

Transmembrane regions (helical) follow at residues 12–32 (VGKA…MSFI), 79–99 (IFIL…AVVP), 111–131 (VGLL…LFAG), 151–171 (LSYE…TGSF), 183–203 (LWNV…GVAV), 234–254 (FFVG…TLFF), 262–282 (LPPF…FILL), and 301–321 (VCLP…LINV).

Belongs to the complex I subunit 1 family. NDH-1 is composed of 14 different subunits. Subunits NuoA, H, J, K, L, M, N constitute the membrane sector of the complex.

It is found in the cell inner membrane. The catalysed reaction is a quinone + NADH + 5 H(+)(in) = a quinol + NAD(+) + 4 H(+)(out). NDH-1 shuttles electrons from NADH, via FMN and iron-sulfur (Fe-S) centers, to quinones in the respiratory chain. The immediate electron acceptor for the enzyme in this species is believed to be ubiquinone. Couples the redox reaction to proton translocation (for every two electrons transferred, four hydrogen ions are translocated across the cytoplasmic membrane), and thus conserves the redox energy in a proton gradient. This subunit may bind ubiquinone. The chain is NADH-quinone oxidoreductase subunit H from Aeromonas salmonicida (strain A449).